The following is a 341-amino-acid chain: RNA 3'-terminal phosphate cyclase (341 aa).

Residues Q102 and 283–287 each bind ATP; that span reads HLADQ. Residue H308 is the Tele-AMP-histidine intermediate of the active site.

The protein belongs to the RNA 3'-terminal cyclase family. Type 1 subfamily.

The protein localises to the cytoplasm. It carries out the reaction a 3'-end 3'-phospho-ribonucleotide-RNA + ATP = a 3'-end 2',3'-cyclophospho-ribonucleotide-RNA + AMP + diphosphate. In terms of biological role, catalyzes the conversion of 3'-phosphate to a 2',3'-cyclic phosphodiester at the end of RNA. The mechanism of action of the enzyme occurs in 3 steps: (A) adenylation of the enzyme by ATP; (B) transfer of adenylate to an RNA-N3'P to produce RNA-N3'PP5'A; (C) and attack of the adjacent 2'-hydroxyl on the 3'-phosphorus in the diester linkage to produce the cyclic end product. The biological role of this enzyme is unknown but it is likely to function in some aspects of cellular RNA processing. The protein is RNA 3'-terminal phosphate cyclase of Ectopseudomonas mendocina (strain ymp) (Pseudomonas mendocina).